The following is a 518-amino-acid chain: NADH-quinone oxidoreductase subunit N (518 aa).

A run of 14 helical transmembrane segments spans residues 18–38 (FRPEMALTFGTLVLFVLDLVF), 45–65 (VALLTAGALAVLAAAAGLLAI), 82–102 (AFAIFFKWLFLAAGALTVIIA), 113–133 (IGQFFALLMAIVLGMFMMASA), 136–156 (LLMVYLSLELVSMVSYVLAGF), 171–191 (VIYGGVASGVMLFGMSYLYGL), 220–240 (VALVVAIVFVTAGIGYKVAAV), 254–274 (PTPFTAFLSVGPKAAGFALAI), 295–315 (LAGIPWPAVVGVIAAVTMTLG), 328–348 (LLAYSSIAHAGYTLMGLSAVS), 355–375 (VMIYMLVYLVMNVGAFLVVIL), 399–419 (AVAFAIFLFSLTGLPPFAGFV), 439–459 (WYAWLALIGALNTAIALYYYV), and 486–506 (VMLGAFSVAILVFGIWWTPMV).

It belongs to the complex I subunit 2 family. NDH-1 is composed of 14 different subunits. Subunits NuoA, H, J, K, L, M, N constitute the membrane sector of the complex.

It is found in the cell inner membrane. It carries out the reaction a quinone + NADH + 5 H(+)(in) = a quinol + NAD(+) + 4 H(+)(out). Its function is as follows. NDH-1 shuttles electrons from NADH, via FMN and iron-sulfur (Fe-S) centers, to quinones in the respiratory chain. The immediate electron acceptor for the enzyme in this species is believed to be ubiquinone. Couples the redox reaction to proton translocation (for every two electrons transferred, four hydrogen ions are translocated across the cytoplasmic membrane), and thus conserves the redox energy in a proton gradient. The sequence is that of NADH-quinone oxidoreductase subunit N from Anaeromyxobacter sp. (strain Fw109-5).